Reading from the N-terminus, the 95-residue chain is Integration host factor subunit beta (95 aa).

Residues 56–95 (RAPRTGRNPKTGETVELDGKHVPHFKPGKELRDRVNESIA) are disordered. A compositionally biased stretch (basic and acidic residues) spans 72-95 (LDGKHVPHFKPGKELRDRVNESIA).

The protein belongs to the bacterial histone-like protein family. Heterodimer of an alpha and a beta chain.

In terms of biological role, this protein is one of the two subunits of integration host factor, a specific DNA-binding protein that functions in genetic recombination as well as in transcriptional and translational control. The polypeptide is Integration host factor subunit beta (Pseudoalteromonas translucida (strain TAC 125)).